Reading from the N-terminus, the 392-residue chain is ATP-dependent RNA helicase eIF4A (392 aa).

Positions 19-47 match the Q motif motif; it reads DTFDDMNLKPELLRGIYAYGFERPSAIQQ. The Helicase ATP-binding domain maps to 50–220; the sequence is IMPILGERDV…TKFMRDPIRI (171 aa). 63–70 is an ATP binding site; it reads AQSGTGKT. S65 bears the Phosphoserine mark. Positions 168 to 171 match the DEAD box motif; that stretch reads DEAD. One can recognise a Helicase C-terminal domain in the interval 231–392; sequence GIKQFYVAVE…EMPMNIADLI (162 aa).

It belongs to the DEAD box helicase family. eIF4A subfamily. In terms of assembly, component of the eIF4F complex, which composition varies with external and internal environmental conditions. It is composed of at least eIF4A, eIF4E and eIF4G.

It localises to the cytoplasm. It catalyses the reaction ATP + H2O = ADP + phosphate + H(+). Its function is as follows. ATP-dependent RNA helicase which is a subunit of the eIF4F complex involved in cap recognition and is required for mRNA binding to ribosome. In the current model of translation initiation, eIF4A unwinds RNA secondary structures in the 5'-UTR of mRNAs which is necessary to allow efficient binding of the small ribosomal subunit, and subsequent scanning for the initiator codon. The sequence is that of ATP-dependent RNA helicase eIF4A (tif1) from Schizosaccharomyces pombe (strain 972 / ATCC 24843) (Fission yeast).